A 327-amino-acid chain; its full sequence is 3' cyclic ADP-D-ribose synthase AaTIR (327 aa).

Positions 10–120 are TIR domain; the sequence is VALSFAGENR…GILKTIGYIN (111 aa). Residue K229 is part of the active site.

Homodimer.

The enzyme catalyses NADP(+) + H2O = ADP-D-ribose 2'-phosphate + nicotinamide + H(+). It carries out the reaction NAD(+) = 3'cADPR + nicotinamide + H(+). Functionally, NAD(+) hydrolase (NADase) that generates 3'cADPR, a cyclization variant of cyclic ADP-D-ribose (also called v2-cADPR). Also cleaves NADP(+), but does not cyclize the product. This chain is 3' cyclic ADP-D-ribose synthase AaTIR, found in Aquimarina amphilecti.